Consider the following 344-residue polypeptide: NADH-ubiquinone oxidoreductase chain 2 (344 aa).

Helical transmembrane passes span 1 to 21, 24 to 44, 59 to 79, 94 to 114, 121 to 141, 150 to 170, 177 to 197, 201 to 221, 245 to 265, 273 to 293, and 324 to 344; these read MNPLALTIFLLSLAIGTTITL, FHWLLAWIGLEINTLAIIPLM, YFLTQAAASALVLFSSLISAW, MNILSIALMMKLGLAPLHFWI, ISLPTGLILSTWQKIAPMALL, LNLTIALGLTSIMVGGWGGIG, IMAFSSIGHLGWIIVILKFDP, LLNFVLYIIMTAAMFMSLTTI, LILLSLAGLPPLTGFTPKLLI, NATLLAVMVMFISLLALFFYI, and TAIMNTMALILLPITPTLLLL.

It belongs to the complex I subunit 2 family.

The protein resides in the mitochondrion inner membrane. The catalysed reaction is a ubiquinone + NADH + 5 H(+)(in) = a ubiquinol + NAD(+) + 4 H(+)(out). Functionally, core subunit of the mitochondrial membrane respiratory chain NADH dehydrogenase (Complex I) that is believed to belong to the minimal assembly required for catalysis. Complex I functions in the transfer of electrons from NADH to the respiratory chain. The immediate electron acceptor for the enzyme is believed to be ubiquinone. The protein is NADH-ubiquinone oxidoreductase chain 2 (MT-ND2) of Aquarana catesbeiana (American bullfrog).